The sequence spans 143 residues: Large ribosomal subunit protein uL11 (143 aa).

The protein belongs to the universal ribosomal protein uL11 family. As to quaternary structure, part of the ribosomal stalk of the 50S ribosomal subunit. Interacts with L10 and the large rRNA to form the base of the stalk. L10 forms an elongated spine to which L12 dimers bind in a sequential fashion forming a multimeric L10(L12)X complex. One or more lysine residues are methylated.

Forms part of the ribosomal stalk which helps the ribosome interact with GTP-bound translation factors. This is Large ribosomal subunit protein uL11 from Paraburkholderia xenovorans (strain LB400).